We begin with the raw amino-acid sequence, 474 residues long: ATP synthase subunit beta 2 (474 aa).

Residue 151–158 (GGAGVGKT) coordinates ATP.

It belongs to the ATPase alpha/beta chains family. As to quaternary structure, F-type ATPases have 2 components, CF(1) - the catalytic core - and CF(0) - the membrane proton channel. CF(1) has five subunits: alpha(3), beta(3), gamma(1), delta(1), epsilon(1). CF(0) has four main subunits: a(1), b(1), b'(1) and c(9-12).

It localises to the cell inner membrane. The enzyme catalyses ATP + H2O + 4 H(+)(in) = ADP + phosphate + 5 H(+)(out). Functionally, produces ATP from ADP in the presence of a proton gradient across the membrane. The catalytic sites are hosted primarily by the beta subunits. This chain is ATP synthase subunit beta 2, found in Dinoroseobacter shibae (strain DSM 16493 / NCIMB 14021 / DFL 12).